Consider the following 224-residue polypeptide: 7-cyano-7-deazaguanine synthase (224 aa).

8 to 18 (CSGGLDSTVAA) lines the ATP pocket. Zn(2+) is bound by residues Cys-190, Cys-198, Cys-201, and Cys-204.

It belongs to the QueC family. Requires Zn(2+) as cofactor.

It catalyses the reaction 7-carboxy-7-deazaguanine + NH4(+) + ATP = 7-cyano-7-deazaguanine + ADP + phosphate + H2O + H(+). It participates in purine metabolism; 7-cyano-7-deazaguanine biosynthesis. Catalyzes the ATP-dependent conversion of 7-carboxy-7-deazaguanine (CDG) to 7-cyano-7-deazaguanine (preQ(0)). The sequence is that of 7-cyano-7-deazaguanine synthase from Methanothrix thermoacetophila (strain DSM 6194 / JCM 14653 / NBRC 101360 / PT) (Methanosaeta thermophila).